The chain runs to 354 residues: Period circadian protein (354 aa).

2 PAS domains span residues 1-55 (GIVM…VNGQ) and 133-235 (FVMR…HIIE). A disordered region spans residues 318–354 (IQDPDHSYYQRDSVMLGGISPHHDYNDSKSSTGTPLS). Residues 345 to 354 (SKSSTGTPLS) show a composition bias toward polar residues.

Forms a heterodimer with timeless (TIM); the complex then translocates into the nucleus. Post-translationally, phosphorylated with a circadian rhythmicity.

It localises to the nucleus. Involved in the generation of biological rhythms. The biological cycle depends on the rhythmic formation and nuclear localization of the tim-per complex. Light induces the degradation of tim, which promotes elimination of per. Nuclear activity of the heterodimer coordinatively regulates per and tim transcription negative feedback loop. Behaves as a negative element in circadian transcriptional loop. Does not appear to bind DNA, suggesting indirect transcriptional inhibition. The protein is Period circadian protein (per) of Manduca sexta (Tobacco hawkmoth).